Reading from the N-terminus, the 266-residue chain is Type 1 encapsulin shell protein (266 aa).

Belongs to the encapsulin family. Family 1 subfamily. Homomultimeric. This encapsulin nanocompartment is formed by 60 subunits, and encloses one Dyp homohexamer; partially assembled 58-subunit compartments with and without cargo are also purified. May assemble the shell from dimers. Monomers form pentamers, which assemble to form hollow shells with pores 5-8 Angstroms in diameter where 3 pentamers meet.

It localises to the encapsulin nanocompartment. In terms of biological role, shell component of a type 1 encapsulin nanocompartment. Assembles into proteinaceous shells 23-24 nm in diameter with 2-2.5 nm thick walls. Endogenous cargo protein DyP (dye-decolorizing peroxidase) is targeted to the interior via its C-terminal extension; only 1 DyP hexamer is incorporated into each shell. Empty shells can be isolated in the absence of cargo. Cargo encapsulation probably precedes assembly of the nanocompartment; may assemble or disassemble via dimers, subcomplexes with a distinct preference for even numbers of subunits are detected. Nanocompartments are stable against mechanical forces; loaded nanocompartments are less stable than empty ones. Nanocompartments are stable between pH 5-10; they aggregate at pH 9-10 and start to disassemble at pH 11. They are stable in 1M NaCl, 1 M MgCl(2) and 1M CaCl(2), unstable in 20% DMSO (dimethylsulfoxide) and are stable in 20% but not 40% ethanol. The sequence is that of Type 1 encapsulin shell protein from Brevibacterium linens.